Reading from the N-terminus, the 280-residue chain is Capsid fiber protein (280 aa).

This sequence belongs to the phi29likevirus major capsid fiber protein family. As to quaternary structure, homotrimer. Forms a super helix coiled coil in the homotrimer.

The protein localises to the virion. In terms of biological role, protein that forms the 55 capsid fibers. These fibers are not always present and may have been lost in some lab strains. They may enhance the attachment of the virions onto the host cell wall. The chain is Capsid fiber protein from Bacillus phage phi29 (Bacteriophage phi-29).